Here is a 164-residue protein sequence, read N- to C-terminus: Probable ribosome biogenesis protein RLP24 (164 aa).

The protein belongs to the eukaryotic ribosomal protein eL24 family. As to quaternary structure, associated with nucleolar and cytoplasmic pre-60S particles. At the end of biogenesis it dissociates from cytoplasmic pre-60S particles and is likely to be exchanged for its ribosomal homolog, RPL24.

The protein resides in the cytoplasm. Its subcellular location is the nucleus. Functionally, involved in the biogenesis of the 60S ribosomal subunit. Ensures the docking of nog1 to pre-60S particles. Activates and recruits ATPase AFG2 to cytoplasmic pre-60S ribosomal particles. In Dictyostelium discoideum (Social amoeba), this protein is Probable ribosome biogenesis protein RLP24 (rlp24).